The sequence spans 857 residues: Autoinducer 2 sensor kinase/phosphatase LuxQ (857 aa).

The next 2 membrane-spanning stretches (helical) occupy residues 14–34 (IASFITHAVVVVMGVLIVSVL) and 283–303 (FWMAFALISMIGVSIASRWWL). The Histidine kinase domain occupies 486-706 (KMSHELRTPL…RFEIQLPIEL (221 aa)). His489 is subject to Phosphohistidine; by autocatalysis. The Response regulatory domain maps to 731–846 (RVLLVEDNHT…TLHKALEHFK (116 aa)). Position 780 is a 4-aspartylphosphate (Asp780).

Binds the complex formed by AI-2 and LuxP.

The protein localises to the cell inner membrane. The enzyme catalyses ATP + protein L-histidine = ADP + protein N-phospho-L-histidine.. In terms of biological role, at low cell density, in absence of AI-2 (autoinducer 2), LuxQ has a kinase activity and autophosphorylates on a histidine residue. The phosphoryl group is then transferred to an aspartate residue in the response regulator domain. The phosphoryl group is transferred to LuxU, and ultimately to LuxO. At high cell density, in the presence of AI-2, the kinase activity is inactivated, and the response regulator domain has a phosphatase activity. The sequence is that of Autoinducer 2 sensor kinase/phosphatase LuxQ (luxQ) from Vibrio cholerae serotype O1 (strain ATCC 39315 / El Tor Inaba N16961).